Here is a 133-residue protein sequence, read N- to C-terminus: Heat shock protein 15 (133 aa).

Positions valine 9 to isoleucine 71 constitute an S4 RNA-binding domain. Residues asparagine 105–glutamate 133 are disordered. Over residues histidine 111–glutamate 133 the composition is skewed to basic and acidic residues.

It belongs to the HSP15 family. Monomer.

In terms of biological role, involved in the recycling of free 50S ribosomal subunits that still carry a nascent chain. Binds RNA more specifically than DNA. Binds with very high affinity to the free 50S ribosomal subunit. Does not bind it when it is part of the 70S ribosome. The sequence is that of Heat shock protein 15 (hslR) from Escherichia coli O157:H7.